A 208-amino-acid polypeptide reads, in one-letter code: Outer-membrane lipoprotein carrier protein (208 aa).

The first 22 residues, 1 to 22, serve as a signal peptide directing secretion; sequence MKNLLCAVMLTSPLLYSTAVFA.

It belongs to the LolA family. Monomer.

Its subcellular location is the periplasm. Its function is as follows. Participates in the translocation of lipoproteins from the inner membrane to the outer membrane. Only forms a complex with a lipoprotein if the residue after the N-terminal Cys is not an aspartate (The Asp acts as a targeting signal to indicate that the lipoprotein should stay in the inner membrane). This chain is Outer-membrane lipoprotein carrier protein, found in Shewanella sp. (strain W3-18-1).